The chain runs to 375 residues: Growth/differentiation factor 8 (375 aa).

The signal sequence occupies residues 1-23; the sequence is MQKLQLCVYIYLFMLIVAGPVDL. Residues 24–266 constitute a propeptide that is removed on maturation; it reads NENSEQKENV…VTDTPKRSRR (243 aa). N-linked (GlcNAc...) asparagine glycosylation is present at Asn71. 4 cysteine pairs are disulfide-bonded: Cys272/Cys282, Cys281/Cys340, Cys309/Cys372, and Cys313/Cys374.

The protein belongs to the TGF-beta family. As to quaternary structure, homodimer; disulfide-linked. Interacts with WFIKKN2, leading to inhibit its activity. Interacts with FSTL3. In terms of processing, synthesized as large precursor molecule that undergoes proteolytic cleavage to generate an N-terminal propeptide and a disulfide linked C-terminal dimer, which is the biologically active molecule. The circulating form consists of a latent complex of the C-terminal dimer and other proteins, including its propeptide, which maintain the C-terminal dimer in a latent, inactive state. Ligand activation requires additional cleavage of the prodomain by a tolloid-like metalloproteinase.

The protein localises to the secreted. In terms of biological role, acts specifically as a negative regulator of skeletal muscle growth. In Papio hamadryas (Hamadryas baboon), this protein is Growth/differentiation factor 8 (MSTN).